A 167-amino-acid polypeptide reads, in one-letter code: Probable phospholipid hydroperoxide glutathione peroxidase (167 aa).

Residue cysteine 41 is part of the active site.

The protein belongs to the glutathione peroxidase family.

Its subcellular location is the cytoplasm. The enzyme catalyses a hydroperoxy polyunsaturated fatty acid + 2 glutathione = a hydroxy polyunsaturated fatty acid + glutathione disulfide + H2O. Its function is as follows. Protects cells and enzymes from oxidative damage, by catalyzing the reduction of hydrogen peroxide, lipid peroxides and organic hydroperoxide, by glutathione. The polypeptide is Probable phospholipid hydroperoxide glutathione peroxidase (CSA) (Citrus sinensis (Sweet orange)).